We begin with the raw amino-acid sequence, 78 residues long: Conotoxin Cal6.3a (78 aa).

The signal sequence occupies residues 1 to 21 (MRFLHFLIVAVLLASFMESGA). A propeptide spanning residues 22–26 (MPRNP) is cleaved from the precursor. 3 disulfides stabilise this stretch: Cys38/Cys49, Cys41/Cys53, and Cys48/Cys56. Gln76 bears the Glutamine amide mark.

As to expression, expressed by the venom duct.

The protein localises to the secreted. In terms of biological role, probable neurotoxin with unknown target. Possibly targets ion channels. The chain is Conotoxin Cal6.3a from Californiconus californicus (California cone).